Consider the following 357-residue polypeptide: Inositol-tetrakisphosphate 1-kinase 3 (357 aa).

Residues lysine 56 and lysine 98 each contribute to the 1D-myo-inositol 1,3,4-trisphosphate site. Positions 133 and 183 each coordinate ATP. 1D-myo-inositol 1,3,4-trisphosphate is bound by residues histidine 190 and lysine 222. ATP contacts are provided by residues glutamine 211–lysine 222, serine 237, and serine 262. Residues aspartate 302, aspartate 317, and asparagine 319 each coordinate Mg(2+). A 1D-myo-inositol 1,3,4-trisphosphate-binding site is contributed by asparagine 319.

Belongs to the ITPK1 family. As to quaternary structure, monomer. Requires Mg(2+) as cofactor. As to expression, expressed in roots, leaves, flowers, anthers and embryos.

It carries out the reaction 1D-myo-inositol 3,4,5,6-tetrakisphosphate + ATP = 1D-myo-inositol 1,3,4,5,6-pentakisphosphate + ADP + H(+). The catalysed reaction is 1D-myo-inositol 1,3,4-trisphosphate + ATP = 1D-myo-inositol 1,3,4,5-tetrakisphosphate + ADP + H(+). The enzyme catalyses 1D-myo-inositol 1,3,4-trisphosphate + ATP = 1D-myo-inositol 1,3,4,6-tetrakisphosphate + ADP + H(+). Kinase that can phosphorylate various inositol polyphosphate such as Ins(3,4,5,6)P4 or Ins(1,3,4)P3 and participates in phytic acid biosynthesis in developing seeds. Phytic acid is the primary storage form of phosphorus in cereal grains and other plant seeds. This is Inositol-tetrakisphosphate 1-kinase 3 from Oryza sativa subsp. japonica (Rice).